The primary structure comprises 648 residues: Threonine--tRNA ligase (648 aa).

Residues 1–62 form the TGS domain; it reads MVEIILPDGS…PHGAQVAIIT (62 aa). The segment at 243–536 is catalytic; the sequence is DHRRIGKDLD…LVEHYAGWFP (294 aa). 3 residues coordinate Zn(2+): cysteine 336, histidine 387, and histidine 513.

It belongs to the class-II aminoacyl-tRNA synthetase family. As to quaternary structure, homodimer. Zn(2+) serves as cofactor.

The protein localises to the cytoplasm. It carries out the reaction tRNA(Thr) + L-threonine + ATP = L-threonyl-tRNA(Thr) + AMP + diphosphate + H(+). Catalyzes the attachment of threonine to tRNA(Thr) in a two-step reaction: L-threonine is first activated by ATP to form Thr-AMP and then transferred to the acceptor end of tRNA(Thr). Also edits incorrectly charged L-seryl-tRNA(Thr). This is Threonine--tRNA ligase from Magnetococcus marinus (strain ATCC BAA-1437 / JCM 17883 / MC-1).